A 132-amino-acid polypeptide reads, in one-letter code: Transcription antitermination protein NusB (132 aa).

The protein belongs to the NusB family.

In terms of biological role, involved in transcription antitermination. Required for transcription of ribosomal RNA (rRNA) genes. Binds specifically to the boxA antiterminator sequence of the ribosomal RNA (rrn) operons. This chain is Transcription antitermination protein NusB, found in Lachnoclostridium phytofermentans (strain ATCC 700394 / DSM 18823 / ISDg) (Clostridium phytofermentans).